Reading from the N-terminus, the 221-residue chain is Octanoyltransferase (221 aa).

The BPL/LPL catalytic domain occupies 40 to 218 (PNLEDVLILL…AFAEVFGLEL (179 aa)). Substrate contacts are provided by residues 82-89 (RGGEVTYH), 149-151 (AIG), and 162-164 (GFA). C180 acts as the Acyl-thioester intermediate in catalysis.

It belongs to the LipB family.

The protein localises to the cytoplasm. It catalyses the reaction octanoyl-[ACP] + L-lysyl-[protein] = N(6)-octanoyl-L-lysyl-[protein] + holo-[ACP] + H(+). Its pathway is protein modification; protein lipoylation via endogenous pathway; protein N(6)-(lipoyl)lysine from octanoyl-[acyl-carrier-protein]: step 1/2. Functionally, catalyzes the transfer of endogenously produced octanoic acid from octanoyl-acyl-carrier-protein onto the lipoyl domains of lipoate-dependent enzymes. Lipoyl-ACP can also act as a substrate although octanoyl-ACP is likely to be the physiological substrate. In Nostoc sp. (strain PCC 7120 / SAG 25.82 / UTEX 2576), this protein is Octanoyltransferase.